Reading from the N-terminus, the 425-residue chain is Actin-related protein 3 (425 aa).

It belongs to the actin family. ARP3 subfamily. As to quaternary structure, component of the Arp2/3 complex, at least composed of arx-1, arx-2, arx-4 and arx-6.

It localises to the cytoplasm. Its subcellular location is the cytoskeleton. Functions as ATP-binding component of the Arp2/3 complex which is involved in regulation of actin polymerization and together with an activating nucleation-promoting factor (NPF) mediates the formation of branched actin networks. Seems to contact the pointed end of the daughter actin filament. Plays a role in time-dependent memory loss and the retention of conditioned behavior over time. The sequence is that of Actin-related protein 3 from Caenorhabditis elegans.